The sequence spans 283 residues: Cyclin-C (283 aa).

One can recognise a Cyclin N-terminal domain in the interval 46–144 (NVIQALGEHL…ILECEFYLLE (99 aa)). The segment at 252-283 (TILSKMPKPKPPPNSEGEQGPNGSQNSSYSQS) is disordered. Polar residues predominate over residues 272–283 (PNGSQNSSYSQS). At S275 the chain carries Phosphoserine.

This sequence belongs to the cyclin family. Cyclin C subfamily. Component of the Mediator complex, which is composed of MED1, MED4, MED6, MED7, MED8, MED9, MED10, MED11, MED12, MED13, MED13L, MED14, MED15, MED16, MED17, MED18, MED19, MED20, MED21, MED22, MED23, MED24, MED25, MED26, MED27, MED29, MED30, MED31, CCNC, CDK8 and CDC2L6/CDK11. The MED12, MED13, CCNC and CDK8 subunits form a distinct module termed the CDK8 module. Mediator containing the CDK8 module is less active than Mediator lacking this module in supporting transcriptional activation. Individual preparations of the Mediator complex lacking one or more distinct subunits have been variously termed ARC, CRSP, DRIP, PC2, SMCC and TRAP. The cylin/CDK pair formed by CCNC/CDK8 also associates with the large subunit of RNA polymerase II. Highest levels in pancreas. High levels in heart, liver, skeletal muscle and kidney. Low levels in brain.

Its subcellular location is the nucleus. Component of the Mediator complex, a coactivator involved in regulated gene transcription of nearly all RNA polymerase II-dependent genes. Mediator functions as a bridge to convey information from gene-specific regulatory proteins to the basal RNA polymerase II transcription machinery. Mediator is recruited to promoters by direct interactions with regulatory proteins and serves as a scaffold for the assembly of a functional preinitiation complex with RNA polymerase II and the general transcription factors. Binds to and activates cyclin-dependent kinase CDK8 that phosphorylates the CTD (C-terminal domain) of the large subunit of RNA polymerase II (RNAp II), which may inhibit the formation of a transcription initiation complex. The protein is Cyclin-C (CCNC) of Homo sapiens (Human).